The chain runs to 421 residues: UDP-N-acetylglucosamine 1-carboxyvinyltransferase (421 aa).

Position 22–23 (22–23 (KN)) interacts with phosphoenolpyruvate. Arg93 serves as a coordination point for UDP-N-acetyl-alpha-D-glucosamine. Cys117 acts as the Proton donor in catalysis. Cys117 is subject to 2-(S-cysteinyl)pyruvic acid O-phosphothioketal. Residues 122–126 (RPVDL), Asp308, and Leu330 each bind UDP-N-acetyl-alpha-D-glucosamine.

This sequence belongs to the EPSP synthase family. MurA subfamily.

The protein resides in the cytoplasm. It catalyses the reaction phosphoenolpyruvate + UDP-N-acetyl-alpha-D-glucosamine = UDP-N-acetyl-3-O-(1-carboxyvinyl)-alpha-D-glucosamine + phosphate. The protein operates within cell wall biogenesis; peptidoglycan biosynthesis. In terms of biological role, cell wall formation. Adds enolpyruvyl to UDP-N-acetylglucosamine. In Wolinella succinogenes (strain ATCC 29543 / DSM 1740 / CCUG 13145 / JCM 31913 / LMG 7466 / NCTC 11488 / FDC 602W) (Vibrio succinogenes), this protein is UDP-N-acetylglucosamine 1-carboxyvinyltransferase.